Here is a 139-residue protein sequence, read N- to C-terminus: uncharacterized protein (139 aa).

The chain crosses the membrane as a helical span at residues 77–97 (YCFFFFLVLFLNGIIATRGKA).

Its subcellular location is the mitochondrion membrane. This is an uncharacterized protein from Arabidopsis thaliana (Mouse-ear cress).